The sequence spans 336 residues: Acetyl-coenzyme A carboxylase carboxyl transferase subunit alpha (336 aa).

In terms of domain architecture, CoA carboxyltransferase C-terminal spans 48-308 (ALEAKVESLR…KSMLIEELQG (261 aa)).

The protein belongs to the AccA family. In terms of assembly, acetyl-CoA carboxylase is a heterohexamer composed of biotin carboxyl carrier protein (AccB), biotin carboxylase (AccC) and two subunits each of ACCase subunit alpha (AccA) and ACCase subunit beta (AccD).

Its subcellular location is the cytoplasm. The enzyme catalyses N(6)-carboxybiotinyl-L-lysyl-[protein] + acetyl-CoA = N(6)-biotinyl-L-lysyl-[protein] + malonyl-CoA. The protein operates within lipid metabolism; malonyl-CoA biosynthesis; malonyl-CoA from acetyl-CoA: step 1/1. Component of the acetyl coenzyme A carboxylase (ACC) complex. First, biotin carboxylase catalyzes the carboxylation of biotin on its carrier protein (BCCP) and then the CO(2) group is transferred by the carboxyltransferase to acetyl-CoA to form malonyl-CoA. The sequence is that of Acetyl-coenzyme A carboxylase carboxyl transferase subunit alpha from Chlorobaculum parvum (strain DSM 263 / NCIMB 8327) (Chlorobium vibrioforme subsp. thiosulfatophilum).